The primary structure comprises 968 residues: RNA polymerase-associated protein RapA (968 aa).

The 171-residue stretch at 164-334 folds into the Helicase ATP-binding domain; that stretch reads DVGRRHAPRV…FARLRLLDPN (171 aa). 177-184 serves as a coordination point for ATP; that stretch reads DEVGLGKT. Positions 280 to 283 match the DEAH box motif; sequence DEAH. Positions 490-685 constitute a Helicase C-terminal domain; the sequence is RVEWLMGYLT…ALKAQLEQGR (196 aa).

It belongs to the SNF2/RAD54 helicase family. RapA subfamily. Interacts with the RNAP. Has a higher affinity for the core RNAP than for the holoenzyme. Its ATPase activity is stimulated by binding to RNAP.

Its function is as follows. Transcription regulator that activates transcription by stimulating RNA polymerase (RNAP) recycling in case of stress conditions such as supercoiled DNA or high salt concentrations. Probably acts by releasing the RNAP, when it is trapped or immobilized on tightly supercoiled DNA. Does not activate transcription on linear DNA. Probably not involved in DNA repair. The protein is RNA polymerase-associated protein RapA of Salmonella typhi.